The primary structure comprises 198 residues: MNREEQFGILESLLFAAGDAGLSTEQLTEVMEITHIEALNLLELLSERYNGNADRGLILLELAGTFQLATKKAHAEYLRKLVEVPSNTVLSQASLETLAIIAYRQPVTRMEVDEVRGVQTDGPIRTLVAKGLVTDKGRVDGAGRAKLYVTTSEFLDAFGLNSLEDLPKLADPEADDPDQNEMDLFFDRFNQSKEQEEE.

The interval 167 to 198 (PKLADPEADDPDQNEMDLFFDRFNQSKEQEEE) is disordered. Residues 172–181 (PEADDPDQNE) are compositionally biased toward acidic residues.

This sequence belongs to the ScpB family. Homodimer. Homodimerization may be required to stabilize the binding of ScpA to the Smc head domains. Component of a cohesin-like complex composed of ScpA, ScpB and the Smc homodimer, in which ScpA and ScpB bind to the head domain of Smc. The presence of the three proteins is required for the association of the complex with DNA.

It is found in the cytoplasm. Its function is as follows. Participates in chromosomal partition during cell division. May act via the formation of a condensin-like complex containing Smc and ScpA that pull DNA away from mid-cell into both cell halves. The protein is Segregation and condensation protein B of Listeria welshimeri serovar 6b (strain ATCC 35897 / DSM 20650 / CCUG 15529 / CIP 8149 / NCTC 11857 / SLCC 5334 / V8).